We begin with the raw amino-acid sequence, 265 residues long: MAERSAPVGVMDSGVGGLSVLAEIQRLLPSESLLYVADCGHVPYGEKTPDYIRQRCRRIAEFFQAQGAKAMVLACNTATVAAVADLRERYPDWPLVGMEPAVKPAAAATRSGVVGVLATTGTLQSAKFAALLDRFANDVRVVTQPCPGLVELIETGDLGSLQLRQLLLGYVQPLLAAGCDTLILGCTHYPFLRPLLAGMVPADVAIIDTGAAVARQLKRLLAARELLADGPARDAAFWSSADPRSLENILPVLWNTSGSVQRLQL.

Residues 12–13 (DS) and 44–45 (YG) each bind substrate. C75 acts as the Proton donor/acceptor in catalysis. 76–77 (NT) serves as a coordination point for substrate. Catalysis depends on C186, which acts as the Proton donor/acceptor. 187-188 (TH) lines the substrate pocket.

It belongs to the aspartate/glutamate racemases family.

The enzyme catalyses L-glutamate = D-glutamate. It participates in cell wall biogenesis; peptidoglycan biosynthesis. Functionally, provides the (R)-glutamate required for cell wall biosynthesis. In Pseudomonas putida (strain W619), this protein is Glutamate racemase.